Here is a 68-residue protein sequence, read N- to C-terminus: Large ribosomal subunit protein bL32 (68 aa).

Belongs to the bacterial ribosomal protein bL32 family.

This is Large ribosomal subunit protein bL32 from Aster yellows witches'-broom phytoplasma (strain AYWB).